The primary structure comprises 389 residues: Succinate--CoA ligase [ADP-forming] subunit beta (389 aa).

The 228-residue stretch at 9-236 (KELFAKHEVP…KDATDPLELK (228 aa)) folds into the ATP-grasp domain. Residues K45, 52–54 (GRG), S94, and E99 each bind ATP. Mg(2+) contacts are provided by N191 and D205. Residues N256 and 318 to 320 (GIT) each bind substrate.

This sequence belongs to the succinate/malate CoA ligase beta subunit family. As to quaternary structure, heterotetramer of two alpha and two beta subunits. The cofactor is Mg(2+).

The catalysed reaction is succinate + ATP + CoA = succinyl-CoA + ADP + phosphate. It catalyses the reaction GTP + succinate + CoA = succinyl-CoA + GDP + phosphate. It participates in carbohydrate metabolism; tricarboxylic acid cycle; succinate from succinyl-CoA (ligase route): step 1/1. Functionally, succinyl-CoA synthetase functions in the citric acid cycle (TCA), coupling the hydrolysis of succinyl-CoA to the synthesis of either ATP or GTP and thus represents the only step of substrate-level phosphorylation in the TCA. The beta subunit provides nucleotide specificity of the enzyme and binds the substrate succinate, while the binding sites for coenzyme A and phosphate are found in the alpha subunit. The protein is Succinate--CoA ligase [ADP-forming] subunit beta of Rhodococcus opacus (strain B4).